A 1026-amino-acid chain; its full sequence is DNA cross-link repair 1A protein (1026 aa).

Residues 1 to 189 (MLEDTWEEEI…RDSKEPLGSP (189 aa)) form a nuclear localization region region. A disordered region spans residues 12 to 110 (EYKSKRKPKP…HRTRRGKQVT (99 aa)). A compositionally biased stretch (basic and acidic residues) spans 34–65 (SVEKSTDGKHQSKGNEKRTSENPGKTKDHKVC). The span at 71-82 (SQISAGSSQSSS) shows a compositional bias: low complexity. Residues 98–107 (KKQHRTRRGK) are compositionally biased toward basic residues. A UBZ4-type zinc finger spans residues 118–148 (DGYCPSCQMPFSSLLGQTPQWHVFECLDSPP). The Zn(2+) site is built by Cys-121, Cys-124, His-139, and Cys-143. Residues Lys-359, Lys-434, and Lys-522 each participate in a glycyl lysine isopeptide (Lys-Gly) (interchain with G-Cter in SUMO2) cross-link. A nuclear focus formation region spans residues 401–602 (SQEDLPHTDA…SSLSDLEFDA (202 aa)). Disordered stretches follow at residues 474–542 (PLEK…SKKV), 560–590 (ETSL…CKRK), and 602–651 (AKNL…PELG). The span at 527 to 540 (SPSSPKCSPSQPSK) shows a compositional bias: low complexity. A compositionally biased stretch (polar residues) spans 569-581 (EGPNVSPVVSPNQ). Phosphoserine occurs at positions 574 and 578. The span at 619-628 (RQHRRKRHKT) shows a compositional bias: basic residues. Lys-657 participates in a covalent cross-link: Glycyl lysine isopeptide (Lys-Gly) (interchain with G-Cter in SUMO2).

It belongs to the DNA repair metallo-beta-lactamase (DRMBL) family. As to quaternary structure, binds constitutively to TP53BP1. Binds CDC27, which is itself a component of the anaphase promoting complex (APC). Binds PIAS1.

The protein localises to the nucleus. The catalysed reaction is a beta-lactam + H2O = a substituted beta-amino acid. May be required for DNA interstrand cross-link repair. Also required for checkpoint mediated cell cycle arrest in early prophase in response to mitotic spindle poisons. In Mus musculus (Mouse), this protein is DNA cross-link repair 1A protein (Dclre1a).